The primary structure comprises 66 residues: Large ribosomal subunit protein bL35 (66 aa).

Residues 21–40 (KIKSTQSAKRHGMTKRSKRS) are disordered. Basic residues predominate over residues 28-40 (AKRHGMTKRSKRS).

It belongs to the bacterial ribosomal protein bL35 family.

In Ehrlichia canis (strain Jake), this protein is Large ribosomal subunit protein bL35.